The sequence spans 484 residues: tRNA sulfurtransferase (484 aa).

In terms of domain architecture, THUMP spans 63 to 167; that stretch reads QGIRERLSCM…DQRLFVVHDQ (105 aa). ATP is bound by residues 185-186, K267, G289, and Q298; that span reads LM. Cysteines 346 and 457 form a disulfide. Positions 405–483 constitute a Rhodanese domain; the sequence is ALAGQVILDI…GHANVRVYRP (79 aa). C457 serves as the catalytic Cysteine persulfide intermediate.

This sequence belongs to the ThiI family.

The protein localises to the cytoplasm. It carries out the reaction [ThiI sulfur-carrier protein]-S-sulfanyl-L-cysteine + a uridine in tRNA + 2 reduced [2Fe-2S]-[ferredoxin] + ATP + H(+) = [ThiI sulfur-carrier protein]-L-cysteine + a 4-thiouridine in tRNA + 2 oxidized [2Fe-2S]-[ferredoxin] + AMP + diphosphate. It catalyses the reaction [ThiS sulfur-carrier protein]-C-terminal Gly-Gly-AMP + S-sulfanyl-L-cysteinyl-[cysteine desulfurase] + AH2 = [ThiS sulfur-carrier protein]-C-terminal-Gly-aminoethanethioate + L-cysteinyl-[cysteine desulfurase] + A + AMP + 2 H(+). It participates in cofactor biosynthesis; thiamine diphosphate biosynthesis. Its function is as follows. Catalyzes the ATP-dependent transfer of a sulfur to tRNA to produce 4-thiouridine in position 8 of tRNAs, which functions as a near-UV photosensor. Also catalyzes the transfer of sulfur to the sulfur carrier protein ThiS, forming ThiS-thiocarboxylate. This is a step in the synthesis of thiazole, in the thiamine biosynthesis pathway. The sulfur is donated as persulfide by IscS. This chain is tRNA sulfurtransferase, found in Pseudomonas syringae pv. syringae (strain B728a).